The chain runs to 364 residues: Gap junction delta-4 protein (364 aa).

Topologically, residues 1-19 (MEKLNLLGFLIITLNCNVT) are cytoplasmic. Residues 20-40 (IMGMIWLIVEVLLRMLVVVLA) traverse the membrane as a helical segment. The Extracellular segment spans residues 41-76 (GSPIYEDEQERFICNTLQPGCANVCYDLFSPVSPLR). Residues 77–97 (FWLVQSLALLLPSVVFGTYTL) form a helical membrane-spanning segment. Residues 98 to 128 (HRGAKLAAVGGACRPQVPDLSTAYLVHLLLR) are Cytoplasmic-facing. The helical transmembrane segment at 129 to 149 (MLLEAGLAFLHYFLFGFSVPA) threads the bilayer. Residues 150 to 173 (RVSCSHVPCSGAVDCYVSRPTEKS) lie on the Extracellular side of the membrane. The helical transmembrane segment at 174–194 (LLILFFWAVSALSFLLSLADL) threads the bilayer. Over 195–364 (LWILPRRKTL…HLRTKKSEWV (170 aa)) the chain is Cytoplasmic. Residues 331-340 (HLARHSSASK) show a composition bias toward polar residues. Residues 331–364 (HLARHSSASKPQAPCRLTTSGSAPHLRTKKSEWV) form a disordered region.

The protein belongs to the connexin family. Delta-type subfamily. A connexon is composed of a hexamer of connexins.

Its subcellular location is the cell membrane. The protein resides in the cell junction. The protein localises to the gap junction. Its function is as follows. One gap junction consists of a cluster of closely packed pairs of transmembrane channels, the connexons, through which materials of low MW diffuse from one cell to a neighboring cell. The sequence is that of Gap junction delta-4 protein (Gjd4) from Mus musculus (Mouse).